We begin with the raw amino-acid sequence, 747 residues long: Putative ankyrin repeat protein FPV222 (747 aa).

ANK repeat units lie at residues 38–67 (DNCTMLYTAVEHRYIDIIKLLLDHGADPNI), 103–132 (NYRNTFFVYNENRNLEIAKMLIQNGALVNM), 136–165 (KNITPLHIASSSGSYKMVELLLLHGANTNA), 169–198 (YGETSLHYSVSSNDLNISELLIENGTNVNV), 202–231 (DSITALIIAVEIMSIDLVRLLLDKGADTNA), 234–263 (LERFKLYVTETKQNNNILKYLNTNNVNTNV), 294–323 (PCTVPVTLATRKGSKELLEILLEYGCNPDI), 328–357 (TSTYAMHYAVIRKHYEMLNILIRYDAYTDV), 361–393 (QQNTPAHYAVKLPISESCKYLKLLKLAGASFNL), 397–426 (KGRTPLHTACKYNNTEAVKYLIESGCDTNI), 430–460 (MSFTPLNYAVYYEREDTVKILLESGCVDPNL), 464–493 (KEVSPIIQAIKRNNKNIIKMLLNAGIDIKP), 495–524 (NECYGLHMLAALHNKDLLKWLLCTISELEV), and 529–559 (DHYVPLASYVAELSDIRIMEILIEKGLDLNK).

The sequence is that of Putative ankyrin repeat protein FPV222 from Vertebrata (FPV).